Reading from the N-terminus, the 375-residue chain is Putative glutamate--cysteine ligase 2 (375 aa).

The protein belongs to the glutamate--cysteine ligase type 2 family. YbdK subfamily.

The enzyme catalyses L-cysteine + L-glutamate + ATP = gamma-L-glutamyl-L-cysteine + ADP + phosphate + H(+). In terms of biological role, ATP-dependent carboxylate-amine ligase which exhibits weak glutamate--cysteine ligase activity. This is Putative glutamate--cysteine ligase 2 from Azoarcus sp. (strain BH72).